Reading from the N-terminus, the 519-residue chain is MKFGVLFSVFAAIVSALPLQEGPLNKRAYPSFEAYSNYKVDRTDLETFLDKQKEVSLYYLLQNIAYPEGQFNNGVPGTVIASPSTSNPDYYYQWTRDSAITFLTVLSELEDNNFNTTLAKAVEYYINTSYNLQRTSNPSGSFDDENHKGLGEPKFNTDGSAYTGAWGRPQNDGPALRAYAISRYLNDVNSLNEGKLVLTDSGDINFSSTEDIYKNIIKPDLEYVIGYWDSTGFDLWEENQGRHFFTSLVQQKALAYAVDIAKSFDDGDFANTLSSTASTLESYLSGSDGGFVNTDVNHIVENPDLLQQNSRQGLDSATYIGPLLTHDIGESSSTPFDVDNEYVLQSYYLLLEDNKDRYSVNSAYSAGAAIGRYPEDVYNGDGSSEGNPWFLATAYAAQVPYKLAYDAKSASNDITINKINYDFFNKYIVDLSTINSAYQSSDSVTIKSGSDEFNTVADNLVTFGDSFLQVILDHINDDGSLNEQLNRYTGYSTGAYSLTWSSGALLEAIRLRNKVKALA.

Positions 1 to 27 are cleaved as a signal peptide; that stretch reads MKFGVLFSVFAAIVSALPLQEGPLNKR. N-linked (GlcNAc...) asparagine glycans are attached at residues Asn115 and Asn127. Residue Trp166 coordinates substrate. The N-linked (GlcNAc...) asparagine glycan is linked to Asn205. Asp234 serves as the catalytic Proton acceptor. Glu237 serves as the catalytic Proton donor.

The protein belongs to the glycosyl hydrolase 15 family.

The catalysed reaction is Hydrolysis of terminal (1-&gt;4)-linked alpha-D-glucose residues successively from non-reducing ends of the chains with release of beta-D-glucose.. The protein is Glucoamylase GLU1 (GLU1) of Saccharomycopsis fibuligera (Yeast).